We begin with the raw amino-acid sequence, 1474 residues long: Alpha-2-macroglobulin (1474 aa).

Positions 1 to 23 are cleaved as a signal peptide; it reads MGKNKLLHPSLVLLLLVLLPTDA. A disulfide bridge links cysteine 48 with cysteine 86. An N-linked (GlcNAc...) (complex) asparagine glycan is attached at asparagine 55. Asparagine 70 and asparagine 247 each carry an N-linked (GlcNAc...) asparagine glycan. Intrachain disulfides connect cysteine 251–cysteine 299 and cysteine 269–cysteine 287. Residues asparagine 396 and asparagine 410 are each glycosylated (N-linked (GlcNAc...) asparagine). Cystine bridges form between cysteine 470-cysteine 563, cysteine 595-cysteine 771, cysteine 642-cysteine 689, cysteine 821-cysteine 849, cysteine 847-cysteine 883, cysteine 921-cysteine 1321, cysteine 1079-cysteine 1127, and cysteine 1352-cysteine 1467. A bait region region spans residues 690–728; sequence PQLQQYEMHGPEGLRVGFYESDVMGRGHARLVHVEEPHT. Residues glutamine 693 and glutamine 694 each participate in an isoglutamyl lysine isopeptide (Gln-Lys) (interchain with K-? in other proteins) cross-link. 3 inhibitory regions span residues 704-709, 719-723, and 730-735; these read RVGFYE, RLVHV, and TVRKYF. An N-linked (GlcNAc...) asparagine glycan is attached at asparagine 869. Residues 972-975 constitute a cross-link (isoglutamyl cysteine thioester (Cys-Gln)); the sequence is CGEQ. A glycan (N-linked (GlcNAc...) asparagine) is linked at asparagine 991. N-linked (GlcNAc...) (complex) asparagine glycosylation is present at asparagine 1424.

The protein belongs to the protease inhibitor I39 (alpha-2-macroglobulin) family. Homotetramer; disulfide-linked. As to expression, secreted in plasma.

It is found in the secreted. Its function is as follows. Is able to inhibit all four classes of proteinases by a unique 'trapping' mechanism. This protein has a peptide stretch, called the 'bait region' which contains specific cleavage sites for different proteinases. When a proteinase cleaves the bait region, a conformational change is induced in the protein which traps the proteinase. The entrapped enzyme remains active against low molecular weight substrates (activity against high molecular weight substrates is greatly reduced). Following cleavage in the bait region, a thioester bond is hydrolyzed and mediates the covalent binding of the protein to the proteinase. This chain is Alpha-2-macroglobulin (A2M), found in Homo sapiens (Human).